Consider the following 418-residue polypeptide: MFGRAPKKSDNTKYYEVLGVSKNATPEDLKKAYRKAAIKNHPDKGGDPEKFKEIGQAYEVLNDPEKREIYDQYGEEGLKEGMGGGGGVHDPFDIFQSFFGGGGFGGGGSSRGRRQRRGEDVVHPLKVSLEDLYNGTSKKLSLSRNVLCTKCKGKGSKSGASMNCASCQGSGMKVSIRQLGPGMIQQMQHPCNECKGTGEMISDKDRCPQCKGEKVVQQKKVLEVHVEKGMQNGQKITFPGEADEAPDTVTGDIVFVLQQKEHPKFKRKGDDLFYEHSLSLTEALCGFQFVLTHLDNRQLLIKSNPGEVIKPDQFKGINDEGMPMYQRPFMRGKLYIHFSVDFPDSLTPDQCKALESVLPSRNASRLTDMEIDECEETTMHDVNIEEEMRRKQHQQAQEAYDEDDEGHGGAQRVQCAQQ.

A J domain is found at 11 to 76 (NTKYYEVLGV…REIYDQYGEE (66 aa)). Residues 135–219 (GTSKKLSLSR…CKGEKVVQQK (85 aa)) form a CR-type zinc finger. CXXCXGXG motif repeat units follow at residues 148-155 (CTKCKGKG), 164-171 (CASCQGSG), 191-198 (CNECKGTG), and 207-214 (CPQCKGEK). The disordered stretch occupies residues 382 to 418 (VNIEEEMRRKQHQQAQEAYDEDDEGHGGAQRVQCAQQ). The residue at position 415 (Cys-415) is a Cysteine methyl ester. Residue Cys-415 is the site of S-farnesyl cysteine attachment. Positions 416–418 (AQQ) are cleaved as a propeptide — removed in mature form.

It localises to the membrane. Its function is as follows. Plays a continuous role in plant development probably in the structural organization of compartments. This is DnaJ protein homolog 2 (LDJ2) from Allium porrum (Leek).